A 468-amino-acid chain; its full sequence is uncharacterized protein (468 aa).

The tract at residues 447 to 468 (AVHVSNGDKPKVALPDTQLGSH) is disordered.

This sequence belongs to the mycobacterial PPE family.

This is an uncharacterized protein from Mycobacterium tuberculosis (strain CDC 1551 / Oshkosh).